The sequence spans 295 residues: Bifunctional protein FolD (295 aa).

NADP(+) is bound by residues 172–174, Ser197, and Ile238; that span reads GRS.

The protein belongs to the tetrahydrofolate dehydrogenase/cyclohydrolase family. Homodimer.

The enzyme catalyses (6R)-5,10-methylene-5,6,7,8-tetrahydrofolate + NADP(+) = (6R)-5,10-methenyltetrahydrofolate + NADPH. It carries out the reaction (6R)-5,10-methenyltetrahydrofolate + H2O = (6R)-10-formyltetrahydrofolate + H(+). It functions in the pathway one-carbon metabolism; tetrahydrofolate interconversion. Its function is as follows. Catalyzes the oxidation of 5,10-methylenetetrahydrofolate to 5,10-methenyltetrahydrofolate and then the hydrolysis of 5,10-methenyltetrahydrofolate to 10-formyltetrahydrofolate. The sequence is that of Bifunctional protein FolD from Rickettsia akari (strain Hartford).